The following is a 334-amino-acid chain: Holliday junction branch migration complex subunit RuvB (334 aa).

Residues 1–181 form a large ATPase domain (RuvB-L) region; sequence MQDRLISGTE…FGIVQRLEFY (181 aa). ATP is bound by residues isoleucine 20, arginine 21, glycine 62, lysine 65, threonine 66, threonine 67, 128–130, arginine 171, tyrosine 181, and arginine 218; that span reads EDY. Threonine 66 serves as a coordination point for Mg(2+). Positions 182 to 252 are small ATPAse domain (RuvB-S); sequence SVEDLTHIVS…MAQRALDMLN (71 aa). The segment at 255-334 is head domain (RuvB-H); it reads KAGLDTLDRR…FGMTPPEPKN (80 aa). Residues arginine 310 and arginine 315 each coordinate DNA.

This sequence belongs to the RuvB family. As to quaternary structure, homohexamer. Forms an RuvA(8)-RuvB(12)-Holliday junction (HJ) complex. HJ DNA is sandwiched between 2 RuvA tetramers; dsDNA enters through RuvA and exits via RuvB. An RuvB hexamer assembles on each DNA strand where it exits the tetramer. Each RuvB hexamer is contacted by two RuvA subunits (via domain III) on 2 adjacent RuvB subunits; this complex drives branch migration. In the full resolvosome a probable DNA-RuvA(4)-RuvB(12)-RuvC(2) complex forms which resolves the HJ.

It is found in the cytoplasm. The enzyme catalyses ATP + H2O = ADP + phosphate + H(+). The RuvA-RuvB-RuvC complex processes Holliday junction (HJ) DNA during genetic recombination and DNA repair, while the RuvA-RuvB complex plays an important role in the rescue of blocked DNA replication forks via replication fork reversal (RFR). RuvA specifically binds to HJ cruciform DNA, conferring on it an open structure. The RuvB hexamer acts as an ATP-dependent pump, pulling dsDNA into and through the RuvAB complex. RuvB forms 2 homohexamers on either side of HJ DNA bound by 1 or 2 RuvA tetramers; 4 subunits per hexamer contact DNA at a time. Coordinated motions by a converter formed by DNA-disengaged RuvB subunits stimulates ATP hydrolysis and nucleotide exchange. Immobilization of the converter enables RuvB to convert the ATP-contained energy into a lever motion, pulling 2 nucleotides of DNA out of the RuvA tetramer per ATP hydrolyzed, thus driving DNA branch migration. The RuvB motors rotate together with the DNA substrate, which together with the progressing nucleotide cycle form the mechanistic basis for DNA recombination by continuous HJ branch migration. Branch migration allows RuvC to scan DNA until it finds its consensus sequence, where it cleaves and resolves cruciform DNA. This Acinetobacter baumannii (strain AB307-0294) protein is Holliday junction branch migration complex subunit RuvB.